Consider the following 384-residue polypeptide: Aryl-alcohol dehydrogenase GME11368 (384 aa).

Asp69 contacts NADP(+). Tyr74 acts as the Proton donor in catalysis. Residues 177-178 (SD), Gln203, and 301-309 (RKPEHLKAN) each bind NADP(+).

This sequence belongs to the aldo/keto reductase family. Aldo/keto reductase 2 subfamily.

It participates in secondary metabolite biosynthesis. In terms of biological role, aryl-alcohol dehydrogenase; part of the gene cluster that mediates the biosynthesis of dibenzodioxocinones such as pestalotiollide B, a novel class of inhibitors against cholesterol ester transfer protein (CEPT). The biosynthesis initiates from condensation of acetate and malonate units catalyzed by the non-reducing PKS pks8/GME11356. Pks8/GME11356 lacks a thioesterase (TE) domain, which is important to the cyclizing of the third ring of atrochrysone carboxylic acid, and the esterase GME11355 might play the role of TE and catalyzes the cyclization reaction of the C ring. The lactamase-like protein GME11357 (or other beta-lactamases in Pestalotiopsis microspora) probably hydrolyzes the thioester bond between the ACP of pks8/GME11356 and the intermediate to release atrochrysone carboxylic acid, which is spontaneously dehydrates to form endocrocin anthrone. Endocrocin anthrone is further converted to emodin via the endocrocin intermediate. Emodin is then oxidized by several enzymes such as the Baeyer-Villiger oxidase GME11358, the oxidoreductase GME11367, the short chain dehydrogenase/reductase GME11373, as well as by other oxidoreductases from the cluster, to modify the A and C rings and open the B ring, and finally yield monodictyphenone. The prenyltransferase GME11375 may catalyze the addition reaction between the C5 side chains and the carbon bone of dibenzodioxocinones. The remaining biochemical reactions to the final product dibenzodioxocinones should be methylation catalyzed by methyltransferase GME11366 and reduction and lactonization reaction catalyzed by a series of oxidordeuctases. In Pestalotiopsis microspora, this protein is Aryl-alcohol dehydrogenase GME11368.